The primary structure comprises 196 residues: Anthranilate synthase component 2 (196 aa).

In terms of domain architecture, Glutamine amidotransferase type-1 spans 3–196; that stretch reads NILLLDNFDS…INWASLKYKG (194 aa). 57–59 contacts L-glutamine; the sequence is GPS. Cysteine 84 serves as the catalytic Nucleophile; for GATase activity. Residues glutamine 88 and 134-135 each bind L-glutamine; that span reads SL. Residues histidine 170 and glutamate 172 each act as for GATase activity in the active site.

As to quaternary structure, heterotetramer consisting of two non-identical subunits: a beta subunit (TrpG) and a large alpha subunit (TrpE).

It catalyses the reaction chorismate + L-glutamine = anthranilate + pyruvate + L-glutamate + H(+). It participates in amino-acid biosynthesis; L-tryptophan biosynthesis; L-tryptophan from chorismate: step 1/5. Part of a heterotetrameric complex that catalyzes the two-step biosynthesis of anthranilate, an intermediate in the biosynthesis of L-tryptophan. In the first step, the glutamine-binding beta subunit (TrpG) of anthranilate synthase (AS) provides the glutamine amidotransferase activity which generates ammonia as a substrate that, along with chorismate, is used in the second step, catalyzed by the large alpha subunit of AS (TrpE) to produce anthranilate. In the absence of TrpG, TrpE can synthesize anthranilate directly from chorismate and high concentrations of ammonia. The sequence is that of Anthranilate synthase component 2 (trpG) from Buchnera aphidicola subsp. Schizaphis graminum (strain Sg).